A 403-amino-acid chain; its full sequence is Phosphopentomutase 2 (403 aa).

Residues Asp-13, Asp-298, His-303, Asp-339, His-340, and His-351 each coordinate Mn(2+).

This sequence belongs to the phosphopentomutase family. Mn(2+) serves as cofactor.

Its subcellular location is the cytoplasm. It carries out the reaction 2-deoxy-alpha-D-ribose 1-phosphate = 2-deoxy-D-ribose 5-phosphate. It catalyses the reaction alpha-D-ribose 1-phosphate = D-ribose 5-phosphate. It functions in the pathway carbohydrate degradation; 2-deoxy-D-ribose 1-phosphate degradation; D-glyceraldehyde 3-phosphate and acetaldehyde from 2-deoxy-alpha-D-ribose 1-phosphate: step 1/2. Its function is as follows. Isomerase that catalyzes the conversion of deoxy-ribose 1-phosphate (dRib-1-P) and ribose 1-phosphate (Rib-1-P) to deoxy-ribose 5-phosphate (dRib-5-P) and ribose 5-phosphate (Rib-5-P), respectively. The chain is Phosphopentomutase 2 from Streptococcus agalactiae serotype Ia (strain ATCC 27591 / A909 / CDC SS700).